Reading from the N-terminus, the 218-residue chain is Thiopurine S-methyltransferase (218 aa).

Residues Trp10, Leu45, Glu66, and Arg123 each coordinate S-adenosyl-L-methionine.

It belongs to the class I-like SAM-binding methyltransferase superfamily. TPMT family.

Its subcellular location is the cytoplasm. The enzyme catalyses S-adenosyl-L-methionine + a thiopurine = S-adenosyl-L-homocysteine + a thiopurine S-methylether.. The polypeptide is Thiopurine S-methyltransferase (Azotobacter vinelandii (strain DJ / ATCC BAA-1303)).